Reading from the N-terminus, the 121-residue chain is Small ribosomal subunit protein uS13 (121 aa).

Positions 96-121 are disordered; that stretch reads PVRGQNTKNNARTRKGKAVAIAGKKK. The segment covering 106 to 121 has biased composition (basic residues); it reads ARTRKGKAVAIAGKKK.

This sequence belongs to the universal ribosomal protein uS13 family. Part of the 30S ribosomal subunit. Forms a loose heterodimer with protein S19. Forms two bridges to the 50S subunit in the 70S ribosome.

Functionally, located at the top of the head of the 30S subunit, it contacts several helices of the 16S rRNA. In the 70S ribosome it contacts the 23S rRNA (bridge B1a) and protein L5 of the 50S subunit (bridge B1b), connecting the 2 subunits; these bridges are implicated in subunit movement. Contacts the tRNAs in the A and P-sites. This is Small ribosomal subunit protein uS13 from Streptococcus pyogenes serotype M3 (strain SSI-1).